Here is a 123-residue protein sequence, read N- to C-terminus: Large ribosomal subunit protein eL8 (123 aa).

It belongs to the eukaryotic ribosomal protein eL8 family. Part of the 50S ribosomal subunit. Probably part of the RNase P complex.

Its subcellular location is the cytoplasm. Functionally, multifunctional RNA-binding protein that recognizes the K-turn motif in ribosomal RNA, the RNA component of RNase P, box H/ACA, box C/D and box C'/D' sRNAs. This chain is Large ribosomal subunit protein eL8, found in Thermococcus gammatolerans (strain DSM 15229 / JCM 11827 / EJ3).